Reading from the N-terminus, the 696-residue chain is Gametogenetin-binding protein 2 (696 aa).

S360 carries the post-translational modification Phosphoserine.

In terms of assembly, interacts with GGN.

Its subcellular location is the cytoplasmic vesicle. Functionally, may be involved in spermatogenesis. The chain is Gametogenetin-binding protein 2 (Ggnbp2) from Rattus norvegicus (Rat).